The sequence spans 474 residues: Trehalose-6-phosphate synthase (474 aa).

A D-glucose 6-phosphate-binding site is contributed by Arg-10. 22–23 (GG) provides a ligand contact to UDP-alpha-D-glucose. D-glucose 6-phosphate contacts are provided by Tyr-77 and Asp-131. Positions 263 and 268 each coordinate UDP-alpha-D-glucose. Arg-301 contributes to the D-glucose 6-phosphate binding site. UDP-alpha-D-glucose is bound by residues Phe-340 and 366 to 370 (LVAKE).

The protein belongs to the glycosyltransferase 20 family. As to quaternary structure, homotetramer.

The catalysed reaction is D-glucose 6-phosphate + UDP-alpha-D-glucose = alpha,alpha-trehalose 6-phosphate + UDP + H(+). The protein operates within glycan biosynthesis; trehalose biosynthesis. Its function is as follows. Probably involved in the osmoprotection via the biosynthesis of trehalose. Catalyzes the transfer of glucose from UDP-alpha-D-glucose (UDP-Glc) to D-glucose 6-phosphate (Glc-6-P) to form trehalose-6-phosphate. Acts with retention of the anomeric configuration of the UDP-sugar donor. The polypeptide is Trehalose-6-phosphate synthase (Cronobacter sakazakii (strain ATCC BAA-894) (Enterobacter sakazakii)).